Reading from the N-terminus, the 401-residue chain is Argininosuccinate synthase (401 aa).

9–17 (AYSGGLDTS) serves as a coordination point for ATP. Tyr-86 is an L-citrulline binding site. Gly-116 provides a ligand contact to ATP. L-aspartate contacts are provided by Thr-118, Asn-122, and Asp-123. Position 122 (Asn-122) interacts with L-citrulline. 5 residues coordinate L-citrulline: Arg-126, Ser-174, Ser-183, Glu-259, and Tyr-271.

The protein belongs to the argininosuccinate synthase family. Type 1 subfamily. As to quaternary structure, homotetramer.

The protein localises to the cytoplasm. It carries out the reaction L-citrulline + L-aspartate + ATP = 2-(N(omega)-L-arginino)succinate + AMP + diphosphate + H(+). Its pathway is amino-acid biosynthesis; L-arginine biosynthesis; L-arginine from L-ornithine and carbamoyl phosphate: step 2/3. The chain is Argininosuccinate synthase from Bacillus anthracis (strain A0248).